We begin with the raw amino-acid sequence, 580 residues long: Arginine--tRNA ligase (580 aa).

Residues 123 to 133 (PNIAKEMHVGH) carry the 'HIGH' region motif.

The protein belongs to the class-I aminoacyl-tRNA synthetase family. Monomer.

It is found in the cytoplasm. The catalysed reaction is tRNA(Arg) + L-arginine + ATP = L-arginyl-tRNA(Arg) + AMP + diphosphate. The sequence is that of Arginine--tRNA ligase (argS) from Buchnera aphidicola subsp. Schizaphis graminum (strain Sg).